Here is a 482-residue protein sequence, read N- to C-terminus: Alanine aminotransferase 2 (482 aa).

Lysine 299 carries the post-translational modification N6-(pyridoxal phosphate)lysine.

This sequence belongs to the class-I pyridoxal-phosphate-dependent aminotransferase family. Alanine aminotransferase subfamily. As to quaternary structure, homodimer. Pyridoxal 5'-phosphate serves as cofactor. Post-translationally, the N-terminus is blocked. In terms of tissue distribution, mesophyll and bundle sheath cells.

It catalyses the reaction L-alanine + 2-oxoglutarate = pyruvate + L-glutamate. It participates in photosynthesis; C4 acid pathway. The protein operates within amino-acid degradation; L-alanine degradation via transaminase pathway; pyruvate from L-alanine: step 1/1. Its function is as follows. Transfer of C3 units between the cytosol of mesophyll and bundle sheath cells to maintain a nitrogen-carbon balance in the C4-dicarboxylic pathway. The chain is Alanine aminotransferase 2 from Panicum miliaceum (Proso millet).